The primary structure comprises 130 residues: Phosphoribosyl-AMP cyclohydrolase (130 aa).

Residue Asp77 participates in Mg(2+) binding. Residue Cys78 coordinates Zn(2+). Positions 79 and 81 each coordinate Mg(2+). Zn(2+) is bound by residues Cys95 and Cys102.

The protein belongs to the PRA-CH family. Homodimer. Mg(2+) is required as a cofactor. Zn(2+) serves as cofactor.

It is found in the cytoplasm. It catalyses the reaction 1-(5-phospho-beta-D-ribosyl)-5'-AMP + H2O = 1-(5-phospho-beta-D-ribosyl)-5-[(5-phospho-beta-D-ribosylamino)methylideneamino]imidazole-4-carboxamide. The protein operates within amino-acid biosynthesis; L-histidine biosynthesis; L-histidine from 5-phospho-alpha-D-ribose 1-diphosphate: step 3/9. Its function is as follows. Catalyzes the hydrolysis of the adenine ring of phosphoribosyl-AMP. This Pseudomonas putida (strain ATCC 700007 / DSM 6899 / JCM 31910 / BCRC 17059 / LMG 24140 / F1) protein is Phosphoribosyl-AMP cyclohydrolase.